Reading from the N-terminus, the 1170-residue chain is PAN2-PAN3 deadenylation complex catalytic subunit PAN2 (1170 aa).

WD repeat units lie at residues 104–144 (ENMK…IIKQ) and 280–319 (NISS…HFTD). The linker stretch occupies residues 319–458 (DMAIPIELPE…DPNEIESLKP (140 aa)). Residues 399 to 459 (RRNQVEDTRN…PNEIESLKPE (61 aa)) are disordered. The span at 443 to 452 (VDQEPEDPNE) shows a compositional bias: acidic residues. Residues 459–846 (EAPPLYRNLE…MPAVLLFQIK (388 aa)) enclose the USP domain. The region spanning 894 to 1067 (VALDTEFVSL…EDARTALKLY (174 aa)) is the Exonuclease domain. Positions 897, 899, 1006, and 1059 each coordinate a divalent metal cation. Residues 1094 to 1170 (NFKPPRREDR…PSKASSPLPK (77 aa)) form a disordered region. Residues 1098-1108 (PRREDREKELQ) are compositionally biased toward basic and acidic residues. Residues 1109 to 1119 (RQSTPPNSTAP) show a composition bias toward polar residues.

The protein belongs to the peptidase C19 family. PAN2 subfamily. In terms of assembly, forms a heterotrimer with an asymmetric homodimer of the regulatory subunit PAN3 to form the poly(A)-nuclease (PAN) deadenylation complex. It depends on a divalent metal cation as a cofactor.

The protein resides in the cytoplasm. It catalyses the reaction Exonucleolytic cleavage of poly(A) to 5'-AMP.. With respect to regulation, positively regulated by the regulatory subunit PAN3. Catalytic subunit of the poly(A)-nuclease (PAN) deadenylation complex, one of two cytoplasmic mRNA deadenylases involved in mRNA turnover. PAN specifically shortens poly(A) tails of RNA and the activity is stimulated by poly(A)-binding protein PAB1. PAN deadenylation is followed by rapid degradation of the shortened mRNA tails by the CCR4-NOT complex. Deadenylated mRNAs are then degraded by two alternative mechanisms, namely exosome-mediated 3'-5' exonucleolytic degradation, or deadenylation-dependent mRNA decaping and subsequent 5'-3' exonucleolytic degradation by XRN1. May also be involved in post-transcriptional maturation of mRNA poly(A) tails. In Chaetomium thermophilum (strain DSM 1495 / CBS 144.50 / IMI 039719) (Thermochaetoides thermophila), this protein is PAN2-PAN3 deadenylation complex catalytic subunit PAN2.